A 549-amino-acid polypeptide reads, in one-letter code: Nectin-3 (549 aa).

A signal peptide spans 1–57 (MARTLRPSPLCPGGGKAQLSSASLLGAGLLLQPPTPPPLLLLLFPLLLFSRLCGALA). The Extracellular segment spans residues 58-404 (GPIIVEPHVT…ATIKDDTIAT (347 aa)). Residues 59–165 (PIIVEPHVTA…GNAQSSTTVT (107 aa)) form the Ig-like V-type domain. 6 N-linked (GlcNAc...) asparagine glycosylation sites follow: N73, N83, N125, N186, N222, and N331. A disulfide bridge links C78 with C148. Ig-like C2-type domains are found at residues 170-258 (PTVS…KDIR) and 269-354 (PEVS…KVIY). 2 disulfide bridges follow: C193–C246 and C291–C338. Residues 405–425 (IIASVVGGALFIVLVSVLAGI) traverse the membrane as a helical segment. Over 426–549 (FCYRRRRTFR…SVISRREWYV (124 aa)) the chain is Cytoplasmic.

Belongs to the nectin family. In terms of assembly, cis- and trans-homodimer. Can form trans-heterodimers with NECTIN1, NECTIN2, PVR, IGSF4B/Necl-1 and with IGSF4. Interaction between NECTIN1 and NECTIN3 on the pre- and postsynaptic sites, respectively, initiates the formation of puncta adherentia junctions between axons and dendrites. Interacts (via Cytoplasmic domain) with AFDN, providing a connection with the actin cytoskeleton. Binds with low affinity to TIGIT. (Microbial infection) Interacts with C.difficile toxin TcdB, suggesting that it may contribute to TcdB toxin entry into cells. It was however shown that NECTIN3/PVRL3 does not act as a major receptor for TcdB. In terms of tissue distribution, predominantly expressed in testis and placenta as well as in many cell lines, including epithelial cell lines.

The protein localises to the cell membrane. It localises to the postsynaptic cell membrane. The protein resides in the cell junction. Its subcellular location is the adherens junction. Cell adhesion molecule that promotes cell-cell adhesion through heterophilic trans-interactions with nectins-like or other nectins, such as trans-interaction with NECTIN2 at Sertoli-spermatid junctions. Trans-interaction with PVR induces activation of CDC42 and RAC small G proteins through common signaling molecules such as SRC and RAP1. Induces endocytosis-mediated down-regulation of PVR from the cell surface, resulting in reduction of cell movement and proliferation. Involved in axon guidance by promoting contacts between the commissural axons and the floor plate cells. Also involved in the formation of cell-cell junctions, including adherens junctions and synapses. Promotes formation of checkerboard-like cellular pattern of hair cells and supporting cells in the auditory epithelium via heterophilic interaction with NECTIN1: NECTIN1 is present in the membrane of hair cells and associates with NECTIN3 on supporting cells, thereby mediating heterotypic adhesion between these two cell types. Plays a role in the morphology of the ciliary body. This Homo sapiens (Human) protein is Nectin-3.